A 375-amino-acid polypeptide reads, in one-letter code: Glutamate 5-kinase (375 aa).

K17 lines the ATP pocket. Substrate contacts are provided by S57, D144, and N158. An ATP-binding site is contributed by 178 to 179 (TD). The region spanning 284–360 (SGSIVVDTGA…NEIADILGYK (77 aa)) is the PUA domain.

This sequence belongs to the glutamate 5-kinase family.

The protein resides in the cytoplasm. It catalyses the reaction L-glutamate + ATP = L-glutamyl 5-phosphate + ADP. Its pathway is amino-acid biosynthesis; L-proline biosynthesis; L-glutamate 5-semialdehyde from L-glutamate: step 1/2. In terms of biological role, catalyzes the transfer of a phosphate group to glutamate to form L-glutamate 5-phosphate. In Methanococcoides burtonii (strain DSM 6242 / NBRC 107633 / OCM 468 / ACE-M), this protein is Glutamate 5-kinase.